We begin with the raw amino-acid sequence, 187 residues long: MGKQPLAKKAEMVDEVRSLLQASQMVLVIDYRGLTVSEMNQLRAELRKADAVCMVVKNTLMRRAVADQKAWAGILPFLSGPTAFIMIRGDIPAALKAYQDFAKQTKKTEFRGAAAEGLSLTLDQAKAIAELPPKEVLMAQVAGSLKSVATRLAVGLNAVPTQVARGIQEIPASLARAIRAIADKEAA.

The protein belongs to the universal ribosomal protein uL10 family. Part of the ribosomal stalk of the 50S ribosomal subunit. The N-terminus interacts with L11 and the large rRNA to form the base of the stalk. The C-terminus forms an elongated spine to which L12 dimers bind in a sequential fashion forming a multimeric L10(L12)X complex.

Forms part of the ribosomal stalk, playing a central role in the interaction of the ribosome with GTP-bound translation factors. In Synechococcus sp. (strain JA-3-3Ab) (Cyanobacteria bacterium Yellowstone A-Prime), this protein is Large ribosomal subunit protein uL10.